The following is a 234-amino-acid chain: Leucyl/phenylalanyl-tRNA--protein transferase (234 aa).

Belongs to the L/F-transferase family.

Its subcellular location is the cytoplasm. It catalyses the reaction N-terminal L-lysyl-[protein] + L-leucyl-tRNA(Leu) = N-terminal L-leucyl-L-lysyl-[protein] + tRNA(Leu) + H(+). It carries out the reaction N-terminal L-arginyl-[protein] + L-leucyl-tRNA(Leu) = N-terminal L-leucyl-L-arginyl-[protein] + tRNA(Leu) + H(+). The catalysed reaction is L-phenylalanyl-tRNA(Phe) + an N-terminal L-alpha-aminoacyl-[protein] = an N-terminal L-phenylalanyl-L-alpha-aminoacyl-[protein] + tRNA(Phe). Its function is as follows. Functions in the N-end rule pathway of protein degradation where it conjugates Leu, Phe and, less efficiently, Met from aminoacyl-tRNAs to the N-termini of proteins containing an N-terminal arginine or lysine. The sequence is that of Leucyl/phenylalanyl-tRNA--protein transferase from Escherichia coli O157:H7 (strain EC4115 / EHEC).